A 338-amino-acid polypeptide reads, in one-letter code: MVLGVVGISYREAALKEREAAINILKDFEANTLFSQRFFGGEGSFVLLLTCHRAEIYYFSKSNHNVQSELLSRISALGARPYCYQGLACFTHLFTVTSGMDSLISGETEIQGQVKRAYIKAKTDRELPFALHFLFQKALKEGKDFRSQVSLSHPVVTIESVVEQTLDLHGKSTKDKLLFIGYSDINRKVANGLSAKGYRNLIFCSRKNISIPYATVARSQLSFREPYDVIFFGSSESAKDFPGLSLENLASISNRVIFDFNVPRTFTLMERPKDIVCLDMDFISEQVQKKLQISKQCTNKEKPFLALAARKQWEVYEKKCSHISSSQLQTSRPKLLIL.

Residues 50–53 (TCHR), serine 102, 107–109 (ETE), and glutamine 113 each bind substrate. Residue cysteine 51 is the Nucleophile of the active site. 181–186 (GYSDIN) provides a ligand contact to NADP(+).

This sequence belongs to the glutamyl-tRNA reductase family. Homodimer.

It catalyses the reaction (S)-4-amino-5-oxopentanoate + tRNA(Glu) + NADP(+) = L-glutamyl-tRNA(Glu) + NADPH + H(+). Its pathway is porphyrin-containing compound metabolism; protoporphyrin-IX biosynthesis; 5-aminolevulinate from L-glutamyl-tRNA(Glu): step 1/2. In terms of biological role, catalyzes the NADPH-dependent reduction of glutamyl-tRNA(Glu) to glutamate 1-semialdehyde (GSA). The polypeptide is Glutamyl-tRNA reductase (Chlamydia caviae (strain ATCC VR-813 / DSM 19441 / 03DC25 / GPIC) (Chlamydophila caviae)).